The chain runs to 184 residues: CKLF-like MARVEL transmembrane domain-containing protein 3 (184 aa).

Positions 1-12 (MWPPDAEPEPDP) are enriched in acidic residues. The segment at 1–22 (MWPPDAEPEPDPESAHGPRSGR) is disordered. Residues 36 to 155 (FLCSLKGRLL…DFYLIFNEVA (120 aa)) form the MARVEL domain. The next 3 helical transmembrane spans lie at 64–84 (ASAF…FLFA), 96–116 (LCWP…YFVI), and 131–151 (AAGV…YLIF). Residues 163 to 184 (SGNETTAHRTEEENSNSDSDSD) are disordered. A compositionally biased stretch (acidic residues) spans 175 to 184 (ENSNSDSDSD).

This sequence belongs to the chemokine-like factor family.

It is found in the membrane. This chain is CKLF-like MARVEL transmembrane domain-containing protein 3 (Cmtm3), found in Mus musculus (Mouse).